We begin with the raw amino-acid sequence, 242 residues long: MEPKYQRILIKLSGEALAGEKGVGIDIPTVQAIAKEIAEVHVSGVQIALVIGGGNLWRGEPAADAGMDRVQADYTGMLGTVMNALVMADSLQHYGVDTRVQTAIPMQNVAEPYIRGRALRHLEKNRIVVFGAGIGSPYFSTDTTAALRAAEIEADAILMAKNGVDGVYNADPKKDANAVKFDELTHGEVIKRGLKIMDATASTLSMDNDIDLVVFNMNEAGNIQRVVFGEHIGTTVSNKVCD.

An ATP-binding site is contributed by 11-14; sequence KLSG. Positions 19-24 are involved in allosteric activation by GTP; that stretch reads GEKGVG. G53 contacts UMP. The ATP site is built by G54 and R58. UMP is bound by residues D73 and 134–141; that span reads IGSPYFST. N162, Y168, and D171 together coordinate ATP.

This sequence belongs to the UMP kinase family. Homohexamer.

It is found in the cytoplasm. The catalysed reaction is UMP + ATP = UDP + ADP. It functions in the pathway pyrimidine metabolism; CTP biosynthesis via de novo pathway; UDP from UMP (UMPK route): step 1/1. With respect to regulation, allosterically activated by GTP. Inhibited by UTP. Catalyzes the reversible phosphorylation of UMP to UDP. The protein is Uridylate kinase of Streptococcus pyogenes serotype M1.